A 570-amino-acid polypeptide reads, in one-letter code: Dual specificity testis-specific protein kinase 2 (570 aa).

Residues 58–313 (DFTREKIGSG…EIGKTLKEIM (256 aa)) form the Protein kinase domain. Residues 64–72 (IGSGFFSEV) and lysine 87 each bind ATP. The active-site Proton acceptor is the aspartate 176. Position 219 is a phosphoserine; by autocatalysis (serine 219). Over residues 316–327 (LPEEELERDRKL) the composition is skewed to basic and acidic residues. The disordered stretch occupies residues 316 to 357 (LPEEELERDRKLQPTAKGPLEKVPGGKRLSSLDDKIPHKSPR). Serine 369, serine 456, and serine 460 each carry phosphoserine. The disordered stretch occupies residues 511 to 530 (AMDCSNPQEENGFGPRLKGT).

It belongs to the protein kinase superfamily. TKL Ser/Thr protein kinase family. It depends on Mg(2+) as a cofactor. Requires Mn(2+) as cofactor.

The protein localises to the nucleus. It catalyses the reaction L-seryl-[protein] + ATP = O-phospho-L-seryl-[protein] + ADP + H(+). The catalysed reaction is L-threonyl-[protein] + ATP = O-phospho-L-threonyl-[protein] + ADP + H(+). It carries out the reaction L-tyrosyl-[protein] + ATP = O-phospho-L-tyrosyl-[protein] + ADP + H(+). With respect to regulation, activated by autophosphorylation on Ser-219. Its function is as follows. Dual specificity protein kinase activity catalyzing autophosphorylation and phosphorylation of exogenous substrates on both serine/threonine and tyrosine residues. Phosphorylates cofilin at 'Ser-3'. May play an important role in spermatogenesis. This is Dual specificity testis-specific protein kinase 2 (Tesk2) from Mus musculus (Mouse).